The chain runs to 178 residues: PRA1 family protein 2 (178 aa).

Residues 1–41 (MSEVRLPPLRALDDFVLGSARLVAPDPCDPQRWCHRVINNL) are Cytoplasmic-facing. Residues 42 to 62 (LYYQTNYLICFGLGLALAGYV) form a helical membrane-spanning segment. Over 63–64 (RP) the chain is Extracellular. A helical membrane pass occupies residues 65–85 (LHTLLSALVVAVALGMLVCAA). Over 86-96 (ENRAAVRRCRR) the chain is Cytoplasmic. Residues 97–119 (SHPAACLAAVLAVGFLVLWAAGG) traverse the membrane as a helical segment. Residues 120-122 (AGT) lie on the Extracellular side of the membrane. Residues 123-140 (FLLSIAGPVLLILVHASL) form a helical membrane-spanning segment. The Cytoplasmic segment spans residues 141–178 (RLRNLKNKIENKIESIGLKRTPMGLLLEALGQEQEAGS).

The protein belongs to the PRA1 family. Interacts with CCR5 and GDE1.

The protein resides in the endosome membrane. Functionally, may be involved in ER/Golgi transport and vesicular traffic. Plays a proapoptotic role in cerulenin-induced neuroblastoma apoptosis. This is PRA1 family protein 2 (PRAF2) from Bos taurus (Bovine).